The following is a 210-amino-acid chain: Adenylate kinase isoenzyme 1 (210 aa).

30-35 is an ATP binding site; it reads GSGKGT. The interval 50–79 is NMP; it reads SSGDLLRDEVKSGSPRGAQLTAIMESGALV. Residues Ser51, Arg56, 77-79, 107-110, and Gln114 each bind AMP; these read ALV and GYPR. Residues 144–154 form an LID region; the sequence is HRAQTSGRADD. Arg145 serves as a coordination point for ATP. The AMP site is built by Arg151 and Arg162. Position 190 (Gly190) interacts with ATP.

This sequence belongs to the adenylate kinase family. AK1 subfamily. Monomer.

Its subcellular location is the cytoplasm. It carries out the reaction AMP + ATP = 2 ADP. Its function is as follows. Catalyzes the reversible transfer of the terminal phosphate group between ATP and AMP. Plays an important role in cellular energy homeostasis and in adenine nucleotide metabolism. This is Adenylate kinase isoenzyme 1 from Caenorhabditis elegans.